The following is a 122-amino-acid chain: Large ribosomal subunit protein uL14 (122 aa).

The protein belongs to the universal ribosomal protein uL14 family. In terms of assembly, part of the 50S ribosomal subunit. Forms a cluster with proteins L3 and L19. In the 70S ribosome, L14 and L19 interact and together make contacts with the 16S rRNA in bridges B5 and B8.

Functionally, binds to 23S rRNA. Forms part of two intersubunit bridges in the 70S ribosome. This chain is Large ribosomal subunit protein uL14, found in Streptococcus uberis (strain ATCC BAA-854 / 0140J).